Consider the following 321-residue polypeptide: Probable protein phosphatase 2C 44 (321 aa).

2 disordered regions span residues 1 to 36 (MVGRMERQSASSSASCSPSSSAAGTSSSSSACGGKK) and 51 to 70 (NSSSTDTGKGRSKQSSNKVT). The span at 9-31 (SASSSASCSPSSSAAGTSSSSSA) shows a compositional bias: low complexity. Positions 51 to 69 (NSSSTDTGKGRSKQSSNKV) are enriched in polar residues. In terms of domain architecture, PPM-type phosphatase spans 70–319 (THGFHLVEGK…DDISCIVIRF (250 aa)). Mn(2+) is bound by residues aspartate 107, glycine 108, aspartate 271, and aspartate 310.

It belongs to the PP2C family. It depends on Mg(2+) as a cofactor. Mn(2+) serves as cofactor.

The catalysed reaction is O-phospho-L-seryl-[protein] + H2O = L-seryl-[protein] + phosphate. It catalyses the reaction O-phospho-L-threonyl-[protein] + H2O = L-threonyl-[protein] + phosphate. In Oryza sativa subsp. japonica (Rice), this protein is Probable protein phosphatase 2C 44.